The primary structure comprises 1064 residues: Leucine--tRNA ligase (1064 aa).

The disordered stretch occupies residues Met-1–Thr-25. Positions Pro-106–His-117 match the 'HIGH' region motif. Positions Gly-435–Ala-456 are disordered. The short motif at Lys-831–Ser-835 is the 'KMSKS' region element. Lys-834 contacts ATP.

This sequence belongs to the class-I aminoacyl-tRNA synthetase family.

The protein resides in the cytoplasm. It carries out the reaction tRNA(Leu) + L-leucine + ATP = L-leucyl-tRNA(Leu) + AMP + diphosphate. The protein is Leucine--tRNA ligase of Frankia casuarinae (strain DSM 45818 / CECT 9043 / HFP020203 / CcI3).